Reading from the N-terminus, the 106-residue chain is NADH dehydrogenase [ubiquinone] 1 beta subcomplex subunit 9 (106 aa).

The protein belongs to the complex I LYR family. In terms of assembly, complex I is composed of about 45 different subunits.

It is found in the mitochondrion inner membrane. Functionally, accessory subunit of the mitochondrial membrane respiratory chain NADH dehydrogenase (Complex I), that is believed to be not involved in catalysis. Complex I functions in the transfer of electrons from NADH to the respiratory chain. The immediate electron acceptor for the enzyme is believed to be ubiquinone. The protein is NADH dehydrogenase [ubiquinone] 1 beta subcomplex subunit 9 (ndufb9) of Dictyostelium discoideum (Social amoeba).